The chain runs to 61 residues: Sec-independent protein translocase protein TatA (61 aa).

A helical membrane pass occupies residues 1–21 (MFSNIGFPGLILILVAVLILF).

This sequence belongs to the TatA/E family. As to quaternary structure, forms a complex with TatC.

The protein localises to the cell membrane. Functionally, part of the twin-arginine translocation (Tat) system that transports large folded proteins containing a characteristic twin-arginine motif in their signal peptide across membranes. TatA could form the protein-conducting channel of the Tat system. The polypeptide is Sec-independent protein translocase protein TatA (Bacillus anthracis (strain A0248)).